The chain runs to 466 residues: Probable WRKY transcription factor 32 (466 aa).

Disordered regions lie at residues 1–45 (MEED…MEDL) and 140–166 (SVPT…PRTP). Basic and acidic residues predominate over residues 8 to 38 (DEAKTYTVEKSEKVEPEKDGLSQFRDEEKSL). The segment at residues 162-226 (VPRTPARDGY…NKGLHTHEPP (65 aa)) is a DNA-binding region (WRKY 1). The Zn(2+) site is built by Cys-193, Cys-198, His-221, and His-223. Residues 284 to 317 (HCENEAVEEPEPKRRLKKDNSQSSDSVSKPGKKN) are disordered. The segment at residues 325-390 (GDVGICGDGY…YKGVHNHDMP (66 aa)) is a DNA-binding region (WRKY 2). Zn(2+)-binding residues include Cys-356, Cys-361, His-385, and His-387. A disordered region spans residues 410–439 (TSMRTRTDDQVNIPTSSQCSVGRESEKQSK). Polar residues predominate over residues 419-429 (QVNIPTSSQCS).

This sequence belongs to the WRKY group I family.

It is found in the nucleus. Functionally, transcription factor. Interacts specifically with the W box (5'-(T)TGAC[CT]-3'), a frequently occurring elicitor-responsive cis-acting element. The chain is Probable WRKY transcription factor 32 (WRKY32) from Arabidopsis thaliana (Mouse-ear cress).